Reading from the N-terminus, the 243-residue chain is Trypsin (243 aa).

A signal peptide spans 1-15 (MKFLLLCVLLGAAAA). A propeptide spans 16–20 (FDDDK) (activation peptide). Residues 21-241 (IIGGATCAKS…YNAWIQNTIA (221 aa)) enclose the Peptidase S1 domain. Cystine bridges form between C27–C157, C45–C61, C129–C230, C136–C203, C168–C182, and C193–C217. H60 functions as the Charge relay system in the catalytic mechanism. Residues E72, N74, and E82 each contribute to the Ca(2+) site. Residue D104 is the Charge relay system of the active site. The active-site Charge relay system is S197.

This sequence belongs to the peptidase S1 family. It depends on Ca(2+) as a cofactor.

The protein localises to the secreted. The protein resides in the extracellular space. It carries out the reaction Preferential cleavage: Arg-|-Xaa, Lys-|-Xaa.. The chain is Trypsin from Xenopus laevis (African clawed frog).